The sequence spans 731 residues: Beta-galactosidase (731 aa).

The signal sequence occupies residues Met-1 to Ser-23. Catalysis depends on Glu-182, which acts as the Proton donor. Glu-251 (nucleophile) is an active-site residue. Asn-459 is a glycosylation site (N-linked (GlcNAc...) asparagine).

This sequence belongs to the glycosyl hydrolase 35 family.

The protein resides in the secreted. It localises to the extracellular space. The protein localises to the apoplast. It carries out the reaction Hydrolysis of terminal non-reducing beta-D-galactose residues in beta-D-galactosides.. Involved in cell wall degradation. Degrades polysaccharides containing beta-(1--&gt;4)-linked galactans, acting as an exo-(1--&gt;4)-beta-D-galactanase. The polypeptide is Beta-galactosidase (Malus domestica (Apple)).